The chain runs to 500 residues: Lysine--tRNA ligase (500 aa).

Mg(2+)-binding residues include Glu-410 and Glu-417.

Belongs to the class-II aminoacyl-tRNA synthetase family. Homodimer. It depends on Mg(2+) as a cofactor.

The protein localises to the cytoplasm. The catalysed reaction is tRNA(Lys) + L-lysine + ATP = L-lysyl-tRNA(Lys) + AMP + diphosphate. In Shewanella amazonensis (strain ATCC BAA-1098 / SB2B), this protein is Lysine--tRNA ligase.